The sequence spans 126 residues: Large ribosomal subunit protein bL20c (126 aa).

It belongs to the bacterial ribosomal protein bL20 family.

It is found in the plastid. The protein localises to the chloroplast. Its function is as follows. Binds directly to 23S ribosomal RNA and is necessary for the in vitro assembly process of the 50S ribosomal subunit. It is not involved in the protein synthesizing functions of that subunit. In Guizotia abyssinica (Niger), this protein is Large ribosomal subunit protein bL20c.